The chain runs to 440 residues: UDP-N-acetylglucosamine 1-carboxyvinyltransferase 1 (440 aa).

22 to 23 serves as a coordination point for phosphoenolpyruvate; that stretch reads KN. Arg93 is a UDP-N-acetyl-alpha-D-glucosamine binding site. Cys117 acts as the Proton donor in catalysis. The residue at position 117 (Cys117) is a 2-(S-cysteinyl)pyruvic acid O-phosphothioketal. UDP-N-acetyl-alpha-D-glucosamine is bound by residues 122–126, Asp306, and Val328; that span reads RPIDQ.

It belongs to the EPSP synthase family. MurA subfamily.

The protein resides in the cytoplasm. It catalyses the reaction phosphoenolpyruvate + UDP-N-acetyl-alpha-D-glucosamine = UDP-N-acetyl-3-O-(1-carboxyvinyl)-alpha-D-glucosamine + phosphate. Its pathway is cell wall biogenesis; peptidoglycan biosynthesis. Its function is as follows. Cell wall formation. Adds enolpyruvyl to UDP-N-acetylglucosamine. The sequence is that of UDP-N-acetylglucosamine 1-carboxyvinyltransferase 1 from Halalkalibacterium halodurans (strain ATCC BAA-125 / DSM 18197 / FERM 7344 / JCM 9153 / C-125) (Bacillus halodurans).